The chain runs to 938 residues: Protocadherin gamma-C4 (938 aa).

Residues 1-29 (MLRKVRSWTEIWRWATLLFLFYHLGYVCG) form the signal peptide. 6 consecutive Cadherin domains span residues 30–133 (QIRY…APRF), 134–242 (PRQQ…APAF), 243–350 (QQSS…APYI), 351–455 (TVTS…PPSF), 456–565 (FQRS…APAV), and 572–676 (PGSL…VPDL). Topologically, residues 30-692 (QIRYPVPEES…REGESRLTLY (663 aa)) are extracellular. N-linked (GlcNAc...) asparagine glycans are attached at residues Asn-265, Asn-276, and Asn-444. The chain crosses the membrane as a helical span at residues 693–713 (LAVSLVAICFVSFGSFVALLS). Over 714-938 (KCLRGAACGV…KKKSGKKEKK (225 aa)) the chain is Cytoplasmic. 2 disordered regions span residues 791-847 (PSAP…WPNN) and 908-938 (ATLTNAAGKRDGKAPAGGNGNKKKSGKKEKK). Residues 822–847 (WRFSQAQRPGTSGSQNGDDTGTWPNN) are compositionally biased toward polar residues. Positions 928 to 938 (NKKKSGKKEKK) are enriched in basic residues.

Its subcellular location is the cell membrane. Potential calcium-dependent cell-adhesion protein. May be involved in the establishment and maintenance of specific neuronal connections in the brain. The protein is Protocadherin gamma-C4 (PCDHGC4) of Homo sapiens (Human).